The chain runs to 1427 residues: Coiled-coil domain-containing protein 144A (1427 aa).

Basic and acidic residues predominate over residues Met1–Gly11. 5 disordered regions span residues Met1 to Gln32, Ala87 to Arg189, Leu213 to Glu261, Asn453 to Arg485, and Glu528 to Asn586. 2 stretches are compositionally biased toward polar residues: residues Pro129 to Glu150 and Val167 to Thr178. Acidic residues predominate over residues Gln224 to Gln234. A compositionally biased stretch (polar residues) spans Asn453–Lys467. Residues Tyr490–Leu545 adopt a coiled-coil conformation. The span at Glu528–Asn537 shows a compositional bias: basic and acidic residues. Residues Gly543–Gly552 are compositionally biased toward low complexity. Residues Pro563–Val584 are compositionally biased toward basic and acidic residues. Coiled coils occupy residues Leu648–Glu1129 and Phe1155–Thr1309.

It belongs to the CCDC144 family.

Its function is as follows. May play a role in preventing the formation of kidney stones through inhibition of calcium oxalate monohydrate (COM) crystallization, attenuating COM-induced apoptotic injury to renal epithelial cells. May exhibit antilithiatic (preventing the formation of kidney stones) activity through crystal binding, hindering the crystal attachment to renal epithelial cells, a pre-requisite to initiate inflammatory response. In Homo sapiens (Human), this protein is Coiled-coil domain-containing protein 144A (CCDC144A).